Here is a 427-residue protein sequence, read N- to C-terminus: UBX domain-containing protein 2 (427 aa).

Disordered regions lie at residues 115–143 (FDQSPSQIPFPSSNTEDSSEESDSSSRAS) and 273–331 (ETSG…GVAD). The segment covering 311 to 326 (STTESQGESSSQQAES) has biased composition (low complexity). A UBX domain is found at 349–425 (PGPNVTRIQI…GIQNTALQFE (77 aa)). Ser371 carries the post-translational modification Phosphoserine.

Interacts with cdc48.

Its function is as follows. Involved in CDC48-dependent protein degradation through the ubiquitin/proteasome pathway. This chain is UBX domain-containing protein 2 (ubx2), found in Schizosaccharomyces pombe (strain 972 / ATCC 24843) (Fission yeast).